Reading from the N-terminus, the 274-residue chain is Transcription factor MYB32 (274 aa).

HTH myb-type domains are found at residues 9–61 and 62–116; these read KDHT…INYL and RPDL…KRKL. 2 consecutive DNA-binding regions (H-T-H motif) follow at residues 37–61 and 89–112; these read WRSLPRSAGLQRCGKSCRLRWINYL and WSLIATRLPGRTDNEIKNYWNTHV. The tract at residues 123–144 is disordered; it reads PATHRPINETKTSQDSSDSSKT.

As to expression, mostly expressed in roots, and, to a lower extent, in stems, flower buds, and siliques.

The protein localises to the nucleus. In Arabidopsis thaliana (Mouse-ear cress), this protein is Transcription factor MYB32 (MYB32).